Here is a 419-residue protein sequence, read N- to C-terminus: L-rhamnose isomerase (419 aa).

Positions 262, 294, and 296 each coordinate Mn(2+).

It belongs to the rhamnose isomerase family. As to quaternary structure, homotetramer. The cofactor is Mn(2+).

Its subcellular location is the cytoplasm. The catalysed reaction is L-rhamnopyranose = L-rhamnulose. The protein operates within carbohydrate degradation; L-rhamnose degradation; glycerone phosphate from L-rhamnose: step 1/3. Functionally, catalyzes the interconversion of L-rhamnose and L-rhamnulose. This chain is L-rhamnose isomerase, found in Salmonella agona (strain SL483).